The sequence spans 365 residues: NAD(P)H-quinone oxidoreductase subunit 1, chloroplastic (365 aa).

Helical transmembrane passes span 29 to 49, 106 to 126, 129 to 149, 250 to 270, 302 to 322, and 338 to 358; these read IWLL…VLVI, IAVI…HLVL, LSIG…GLLM, YSGI…LVSS, IFGM…FLFI, and LLNL…LLTT.

Belongs to the complex I subunit 1 family. As to quaternary structure, NDH is composed of at least 16 different subunits, 5 of which are encoded in the nucleus.

It is found in the plastid. The protein localises to the chloroplast thylakoid membrane. The enzyme catalyses a plastoquinone + NADH + (n+1) H(+)(in) = a plastoquinol + NAD(+) + n H(+)(out). The catalysed reaction is a plastoquinone + NADPH + (n+1) H(+)(in) = a plastoquinol + NADP(+) + n H(+)(out). Its function is as follows. NDH shuttles electrons from NAD(P)H:plastoquinone, via FMN and iron-sulfur (Fe-S) centers, to quinones in the photosynthetic chain and possibly in a chloroplast respiratory chain. The immediate electron acceptor for the enzyme in this species is believed to be plastoquinone. Couples the redox reaction to proton translocation, and thus conserves the redox energy in a proton gradient. This chain is NAD(P)H-quinone oxidoreductase subunit 1, chloroplastic, found in Acorus calamus (Sweet flag).